The primary structure comprises 424 residues: Chloroquine resistance transporter (424 aa).

Residues 1-49 (MKFASKKNNQKNSSKNDERYRELDNLVQEGNGSRLGGGSCLGKCAHVFK) lie on the Cytoplasmic side of the membrane. An intramembrane segment occupies 50 to 58 (LIFKEIKDN). Residues 59 to 83 (IFIYILSIIYLSVSVMNTIFAKRTL) form a helical membrane-spanning segment. The Vacuolar portion of the chain corresponds to 84 to 89 (NKIGNY). Residues 90–111 (SFVTSETHNFICMIMFFIVYSL) traverse the membrane as a helical segment. The Cytoplasmic portion of the chain corresponds to 112–126 (FGNKKGNSKERHRSF). The helical transmembrane segment at 127 to 147 (NLQFFAISMLDACSVILAFIG) threads the bilayer. Over 148–152 (LTRTT) the chain is Vacuolar. A helical membrane pass occupies residues 153-173 (GNIQSFVLQLSIPINMFFCFL). The Cytoplasmic segment spans residues 174-180 (ILRYRYH). The helical transmembrane segment at 181–202 (LYNYLGAVIIVVTIALVEMKLS) threads the bilayer. At 203–210 (FETQEENS) the chain is on the vacuolar side. The chain crosses the membrane as a helical span at residues 211 to 236 (IIFNLVLISSLIPVCFSNMTREIVFK). Topologically, residues 237–241 (KYKID) are cytoplasmic. A helical membrane pass occupies residues 242–263 (ILRLNAMVSFFQLFTSCLILPV). At 264–279 (YTLPFLKQLHLPYNEI) the chain is on the vacuolar side. Residues 280 to 292 (WTNIKNGFACLFL) lie within the membrane without spanning it. Cystine bridges form between Cys289–Cys312 and Cys301–Cys309. At 293–314 (GRNTVVENCGLGMAKLCDDCDG) the chain is on the vacuolar side. A helical membrane pass occupies residues 315–339 (AWKTFALFSFFDICDNLITSYIIDK). The Cytoplasmic segment spans residues 340–343 (FSTM). A helical transmembrane segment spans residues 344–361 (TYTIVSCIQGPALAIAYY). Residues 362 to 374 (FKFLAGDVVREPR) lie on the Vacuolar side of the membrane. The helical transmembrane segment at 375 to 397 (LLDFVTLFGYLFGSIIYRVGNII) threads the bilayer. At 398–424 (LERKKMRNEENEDSEGELTNVDSIITQ) the chain is on the cytoplasmic side.

The protein belongs to the CRT-like transporter family. In terms of assembly, monomer.

The protein resides in the membrane. It is found in the vacuole membrane. The enzyme catalyses L-arginine(in) = L-arginine(out). It catalyses the reaction L-lysine(in) = L-lysine(out). It carries out the reaction L-histidine(out) = L-histidine(in). The catalysed reaction is Fe(3+)(in) = Fe(3+)(out). The enzyme catalyses Fe(2+)(in) = Fe(2+)(out). In terms of biological role, nutrient transporter. Substrate transport is pH-dependent. Can transport arginine, lysine, histidine and peptides. Involved in maintaining the osmotic homeostasis of the digestive vacuole. Required for the normal asexual intraerythrocytic proliferation of parasites. Can transport Fe(2+) and Fe(3+). In Plasmodium falciparum (isolate 7G8), this protein is Chloroquine resistance transporter.